Here is a 180-residue protein sequence, read N- to C-terminus: Large ribosomal subunit protein bL17 (180 aa).

The disordered stretch occupies residues 134–180 (AQAKAKKAAAMPTEESEAKPAEEGDVVGASEPDAKAPEEPPAEAPEN).

Belongs to the bacterial ribosomal protein bL17 family. Part of the 50S ribosomal subunit. Contacts protein L32.

In Mycobacterium tuberculosis (strain ATCC 25177 / H37Ra), this protein is Large ribosomal subunit protein bL17.